The sequence spans 289 residues: Serine/threonine-protein phosphatase Pgam5, mitochondrial (289 aa).

A helical transmembrane segment spans residues F7–L23.

The protein belongs to the phosphoglycerate mutase family. BPG-dependent PGAM subfamily. In terms of assembly, interacts with Pk92B/ASK1.

The protein localises to the mitochondrion outer membrane. It catalyses the reaction O-phospho-L-seryl-[protein] + H2O = L-seryl-[protein] + phosphate. It carries out the reaction O-phospho-L-threonyl-[protein] + H2O = L-threonyl-[protein] + phosphate. Functionally, displays phosphatase activity for serine/threonine residues, and dephosphorylates and activates Pk92B kinase. Has apparently no phosphoglycerate mutase activity. The protein is Serine/threonine-protein phosphatase Pgam5, mitochondrial of Drosophila simulans (Fruit fly).